Reading from the N-terminus, the 399-residue chain is Forkhead box protein A4-A (399 aa).

A DNA-binding region (fork-head) is located at residues 119–213; that stretch reads KPPYSYISLI…ENGCYLRRQK (95 aa). Residues 219-234 show a composition bias toward basic and acidic residues; it reads RSKSGEGEKKVNKPGE. The disordered stretch occupies residues 219–290; that stretch reads RSKSGEGEKK…VGLSPTSEQA (72 aa). The segment covering 267–277 has biased composition (polar residues); sequence STGSSIHQACG.

In terms of tissue distribution, during stages 8.5 to 10, expressed in the part of the dorsal mesoderm invaginating the dorsal blastopore lip (Spemann organizer), as a direct response to dorsal mesodermal induction. At stage 12 (mid-gastrulation), restricted to the dorsal midline in the deeper layers of mesodermal cells. Continuously present in the posterior portion of invaginated mesoderm and expressed within the notochord. Also present in the midline of the neural plate during gastrulation, but absent from the notoplate in exogastrula embryos. Expression in the notochord continues in neurula-stage embryos and at stage 20 in addition to the notochord, expression is seen in the pharyngeal endoderm.

It localises to the nucleus. Functionally, transcriptional repressor involved in embryonic nervous system development. Plays a role in the induction and patterning of the anterior-posterior neural axis. Involved in the establishment of floor plate differentiation from neural plate cells during gastrulation. Binds the anf1 promoter sequence to restrict expression of anf1 to the anterior of the neural plate, thereby patterning the forebrain. Can bind to the HNF-3-alpha DNA target sequence. Cooperates with t/bra in a dose-dependent manner to specify dorsal mesoderm formation, including notochord. Binds to DNA via the target sequence 5'-[GA]TAAA[TC]A-3', with 5'-GTAAATA-3' being the preferred binding site. The polypeptide is Forkhead box protein A4-A (foxa4-a) (Xenopus laevis (African clawed frog)).